Reading from the N-terminus, the 246-residue chain is Protein SRL3 (246 aa).

The span at 49 to 61 (SISEAQDSPTSAP) shows a compositional bias: polar residues. Disordered regions lie at residues 49-68 (SISE…GNED) and 200-229 (HAKS…QENS). At Ser-212 the chain carries Phosphoserine.

Interacts with CLN2. Post-translationally, phosphorylated by CDC28, probably in association with G1 cyclin CLN2.

The protein localises to the cytoplasm. Functionally, weakly suppresses a RAD53 null mutation when overexpressed. In Saccharomyces cerevisiae (strain ATCC 204508 / S288c) (Baker's yeast), this protein is Protein SRL3 (SRL3).